The primary structure comprises 291 residues: Putative heme-binding peroxidase (291 aa).

The Proton acceptor role is filled by H61. H185 is a binding site for heme b. Residue W201 is the Tryptophan radical intermediate of the active site.

It belongs to the peroxidase family. Cytochrome c peroxidase subfamily. The cofactor is heme b.

Functionally, destroys radicals which are normally produced within the cells and which are toxic to biological systems. This Candida albicans (strain SC5314 / ATCC MYA-2876) (Yeast) protein is Putative heme-binding peroxidase (CCP2).